The chain runs to 306 residues: tRNA dimethylallyltransferase (306 aa).

An ATP-binding site is contributed by 11–18; the sequence is GPTAVGKS. 13–18 contacts substrate; sequence TAVGKS. The interaction with substrate tRNA stretch occupies residues 35–38; it reads DSIQ.

Belongs to the IPP transferase family. As to quaternary structure, monomer. The cofactor is Mg(2+).

It carries out the reaction adenosine(37) in tRNA + dimethylallyl diphosphate = N(6)-dimethylallyladenosine(37) in tRNA + diphosphate. Catalyzes the transfer of a dimethylallyl group onto the adenine at position 37 in tRNAs that read codons beginning with uridine, leading to the formation of N6-(dimethylallyl)adenosine (i(6)A). This chain is tRNA dimethylallyltransferase, found in Borreliella burgdorferi (strain ZS7) (Borrelia burgdorferi).